Consider the following 55-residue polypeptide: Lantibiotic epilancin 15X (55 aa).

A propeptide spans 1-24 (MKKELFDLNLNKDIEAQKSDLNPQ) (cleaved by ElxP). D-lactate; by the dehydratase ElxB and the dehydrogenase ElxO is present on Ser-25. Position 27 is a 2,3-didehydroalanine (Ser); by the dehydratase ElxB (Ser-27). 2 positions are modified to 2,3-didehydrobutyrine; by the dehydratase ElxB: Thr-31 and Thr-32. Residues 36 to 40 (SKKLC) constitute a cross-link (lanthionine (Ser-Cys); by the dehydratase ElxB and the cyclase ElxC). Cross-links (beta-methyllanthionine (Thr-Cys); by the dehydratase ElxB and the cyclase ElxC) lie at residues 44-47 (TLTC) and 46-49 (TCGC). Position 52 is a 2,3-didehydrobutyrine; by the dehydratase ElxB (Thr-52).

Post-translationally, maturation of this lantibiotic involves the enzymatic conversion of Thr, and Ser into dehydrated AA by ElxB and the formation of thioether bonds with cysteine by the cyclase ElxC. The next steps are cleavage of the leader peptide by ElxP and membrane translocation by ElxT. The leader peptide may be removed before membrane translocation, in contrast to other lantibiotics for which the cleavage occur after translocation. This is suggested by the probable cytoplasmic localization of the serine protease ElxP that cleaves the leader peptide. In terms of processing, the N-terminal D-lactate is probably produced by dehydration of Ser-25 by ElxB, followed by proteolytic removal of the leader peptide by the serine protease ElxP and hydrolysis of the resulting new N-terminal dehydroalanine. This hydrolysis may occur spontaneously. The pyruvate group thus formed is reduced to D-lactate by the NADPH-dependent oxidoreductase ElxO. This N-terminal D-lactate protects the lantibiotic against degradation against aminopeptidase. It is not established whether the 2,3-didehydrobutyrines are the E- or Z-isomers.

In terms of biological role, lanthionine-containing peptide antibiotic (lantibiotic) active on Gram-positive bacteria such as staphylococci, enterococci and streptococci. The bactericidal activity of lantibiotics is based on depolarization of energized bacterial cytoplasmic membranes, initiated by the formation of aqueous transmembrane pores. The chain is Lantibiotic epilancin 15X from Staphylococcus epidermidis.